The primary structure comprises 72 residues: Translation initiation factor IF-1 (72 aa).

The region spanning 1 to 72 is the S1-like domain; it reads MSKEDHIEME…SKARITFRHR (72 aa).

This sequence belongs to the IF-1 family. Component of the 30S ribosomal translation pre-initiation complex which assembles on the 30S ribosome in the order IF-2 and IF-3, IF-1 and N-formylmethionyl-tRNA(fMet); mRNA recruitment can occur at any time during PIC assembly.

Its subcellular location is the cytoplasm. In terms of biological role, one of the essential components for the initiation of protein synthesis. Stabilizes the binding of IF-2 and IF-3 on the 30S subunit to which N-formylmethionyl-tRNA(fMet) subsequently binds. Helps modulate mRNA selection, yielding the 30S pre-initiation complex (PIC). Upon addition of the 50S ribosomal subunit IF-1, IF-2 and IF-3 are released leaving the mature 70S translation initiation complex. The chain is Translation initiation factor IF-1 from Methylococcus capsulatus (strain ATCC 33009 / NCIMB 11132 / Bath).